Reading from the N-terminus, the 176-residue chain is NADH-quinone oxidoreductase subunit I (176 aa).

4Fe-4S ferredoxin-type domains are found at residues 47-77 and 87-116; these read LTRD…MQAA and AWFR…MTSE. [4Fe-4S] cluster is bound by residues Cys-57, Cys-60, Cys-63, Cys-67, Cys-96, Cys-99, Cys-102, and Cys-106.

Belongs to the complex I 23 kDa subunit family. As to quaternary structure, NDH-1 is composed of 14 different subunits. Subunits NuoA, H, J, K, L, M, N constitute the membrane sector of the complex. Requires [4Fe-4S] cluster as cofactor.

It is found in the cell inner membrane. The enzyme catalyses a quinone + NADH + 5 H(+)(in) = a quinol + NAD(+) + 4 H(+)(out). In terms of biological role, NDH-1 shuttles electrons from NADH, via FMN and iron-sulfur (Fe-S) centers, to quinones in the respiratory chain. The immediate electron acceptor for the enzyme in this species is believed to be ubiquinone. Couples the redox reaction to proton translocation (for every two electrons transferred, four hydrogen ions are translocated across the cytoplasmic membrane), and thus conserves the redox energy in a proton gradient. This Syntrophotalea carbinolica (strain DSM 2380 / NBRC 103641 / GraBd1) (Pelobacter carbinolicus) protein is NADH-quinone oxidoreductase subunit I.